Consider the following 154-residue polypeptide: Myoglobin (154 aa).

The Globin domain maps to 2–148 (GLSDGEWQLV…FRNDIAAKYK (147 aa)). Ser-4 is subject to Phosphoserine. His-65 contacts nitrite. O2 is bound at residue His-65. Position 68 is a phosphothreonine (Thr-68). Residue His-94 coordinates heme b.

The protein belongs to the globin family. As to quaternary structure, monomeric.

The protein localises to the cytoplasm. The protein resides in the sarcoplasm. It carries out the reaction Fe(III)-heme b-[protein] + nitric oxide + H2O = Fe(II)-heme b-[protein] + nitrite + 2 H(+). The enzyme catalyses H2O2 + AH2 = A + 2 H2O. Monomeric heme protein which primary function is to store oxygen and facilitate its diffusion within muscle tissues. Reversibly binds oxygen through a pentacoordinated heme iron and enables its timely and efficient release as needed during periods of heightened demand. Depending on the oxidative conditions of tissues and cells, and in addition to its ability to bind oxygen, it also has a nitrite reductase activity whereby it regulates the production of bioactive nitric oxide. Under stress conditions, like hypoxia and anoxia, it also protects cells against reactive oxygen species thanks to its pseudoperoxidase activity. The protein is Myoglobin (MB) of Vulpes chama (Cape fox).